The sequence spans 204 residues: uncharacterized protein (204 aa).

The protein localises to the cytoplasm. It localises to the nucleus. This is an uncharacterized protein from Schizosaccharomyces pombe (strain 972 / ATCC 24843) (Fission yeast).